The chain runs to 172 residues: MAKFQPKVQTEGQDDGMREKMIAVNRVTKVVKGGRILGFAALTVVGDGDGRVGMGKGKSKEVPAAVQKAMEECRRNLVKVSLKNGSIHHSVKGHHGAASVELHPAPKGTGIIAGGPMRAVFEVVGITDIVAKSHGSSNPYNMVRATFDALVNSTTPAEVAAKRGKSVEDIFA.

The S5 DRBM domain maps to 17–80 (MREKMIAVNR…EECRRNLVKV (64 aa)).

It belongs to the universal ribosomal protein uS5 family. In terms of assembly, part of the 30S ribosomal subunit. Contacts proteins S4 and S8.

In terms of biological role, with S4 and S12 plays an important role in translational accuracy. Its function is as follows. Located at the back of the 30S subunit body where it stabilizes the conformation of the head with respect to the body. This chain is Small ribosomal subunit protein uS5, found in Paracidovorax citrulli (strain AAC00-1) (Acidovorax citrulli).